A 480-amino-acid polypeptide reads, in one-letter code: tRNA-2-methylthio-N(6)-dimethylallyladenosine synthase (480 aa).

An MTTase N-terminal domain is found at 29 to 145; sequence GSFWIQTFGC…LEALLTQVDN (117 aa). The [4Fe-4S] cluster site is built by Cys38, Cys74, Cys108, Cys180, Cys184, and Cys187. The 238-residue stretch at 166–403 folds into the Radical SAM core domain; it reads RDSTICAWVN…NALVERIALQ (238 aa). One can recognise a TRAM domain in the interval 406–474; that stretch reads SRYSGKVEQV…AFSLSGTPCE (69 aa).

Belongs to the methylthiotransferase family. MiaB subfamily. In terms of assembly, monomer. [4Fe-4S] cluster serves as cofactor.

The protein resides in the cytoplasm. The enzyme catalyses N(6)-dimethylallyladenosine(37) in tRNA + (sulfur carrier)-SH + AH2 + 2 S-adenosyl-L-methionine = 2-methylsulfanyl-N(6)-dimethylallyladenosine(37) in tRNA + (sulfur carrier)-H + 5'-deoxyadenosine + L-methionine + A + S-adenosyl-L-homocysteine + 2 H(+). Functionally, catalyzes the methylthiolation of N6-(dimethylallyl)adenosine (i(6)A), leading to the formation of 2-methylthio-N6-(dimethylallyl)adenosine (ms(2)i(6)A) at position 37 in tRNAs that read codons beginning with uridine. The chain is tRNA-2-methylthio-N(6)-dimethylallyladenosine synthase from Prochlorococcus marinus (strain MIT 9313).